A 250-amino-acid polypeptide reads, in one-letter code: LOB domain-containing protein 37 (250 aa).

Positions 1-107 constitute an LOB domain; sequence MSCNGCRVLR…VETVLRGGSL (107 aa). Residues 145-227 are disordered; it reads DSTDRNIYHH…DSGTTTTTTA (83 aa). The segment covering 157–170 has biased composition (low complexity); sequence FSSSRSRSTMDSSS.

This sequence belongs to the LOB domain-containing protein family. Expressed in young shoots, roots, stems, leaves and flowers.

The sequence is that of LOB domain-containing protein 37 (LBD37) from Arabidopsis thaliana (Mouse-ear cress).